Reading from the N-terminus, the 490-residue chain is Histone-lysine N-methyltransferase SMYD1 (490 aa).

In terms of domain architecture, SET spans 7–253 (ENVEVFTAEG…EGEELTVSYI (247 aa)). S-adenosyl-L-methionine is bound at residue 17–19 (KGR). Zn(2+)-binding residues include Cys52, Cys55, Cys65, Cys68, Cys74, Cys78, His86, and Cys90. The segment at 52 to 90 (CHTCFKRQEKLHRCGQCKFAHYCDRTCQKDAWLNHKNEC) adopts an MYND-type zinc-finger fold. S-adenosyl-L-methionine contacts are provided by residues His135 and 205–206 (NH). Position 208 (Cys208) interacts with Zn(2+). An S-adenosyl-L-methionine-binding site is contributed by 270-272 (YYF). Residues Cys274, Cys276, and Cys279 each contribute to the Zn(2+) site.

The protein belongs to the class V-like SAM-binding methyltransferase superfamily. Interacts with HDAC1, HDAC2 and HDAC3. Interacts (via MYND-type zinc finger) with NACA isoform skNAC. In terms of tissue distribution, expression seems mostly restricted to heart and skeletal muscle.

The protein localises to the cytoplasm. The protein resides in the nucleus. The enzyme catalyses L-lysyl(4)-[histone H3] + 3 S-adenosyl-L-methionine = N(6),N(6),N(6)-trimethyl-L-lysyl(4)-[histone H3] + 3 S-adenosyl-L-homocysteine + 3 H(+). Functionally, methylates histone H3 at 'Lys-4' (H3K4me), seems able to perform both mono-, di-, and trimethylation. Acts as a transcriptional repressor. Essential for cardiomyocyte differentiation and cardiac morphogenesis. This Homo sapiens (Human) protein is Histone-lysine N-methyltransferase SMYD1 (SMYD1).